A 179-amino-acid polypeptide reads, in one-letter code: MNRLKEKFNTEVTENLMKKFNYSSVMEVPKIDKIVVNMGVGDAVQNSKVLDNAVEELELITGQKPLVTKAKKSIATFRLREGMPIGAKVTLRGERMYEFLDKLISVSLPRVRDFQGVSKKAFDGRGNYTLGVKEQLIFPEIDYDKVSKVRGMDIVIVTTANTDEEARELLANFGMPFRK.

It belongs to the universal ribosomal protein uL5 family. In terms of assembly, part of the 50S ribosomal subunit; part of the 5S rRNA/L5/L18/L25 subcomplex. Contacts the 5S rRNA and the P site tRNA. Forms a bridge to the 30S subunit in the 70S ribosome.

In terms of biological role, this is one of the proteins that bind and probably mediate the attachment of the 5S RNA into the large ribosomal subunit, where it forms part of the central protuberance. In the 70S ribosome it contacts protein S13 of the 30S subunit (bridge B1b), connecting the 2 subunits; this bridge is implicated in subunit movement. Contacts the P site tRNA; the 5S rRNA and some of its associated proteins might help stabilize positioning of ribosome-bound tRNAs. The sequence is that of Large ribosomal subunit protein uL5 from Staphylococcus aureus (strain MW2).